A 711-amino-acid polypeptide reads, in one-letter code: Arginine decarboxylase 2 (711 aa).

N6-(pyridoxal phosphate)lysine is present on Lys147. A substrate-binding site is contributed by 331–341 (IDIGGGLGIDY). Positions 642–661 (MHTKGGSEGENEEEEEDDEF) are disordered. A compositionally biased stretch (acidic residues) spans 650-661 (GENEEEEEDDEF).

Belongs to the Orn/Lys/Arg decarboxylase class-II family. SpeA subfamily. As to quaternary structure, homodimer and heterodimer with ADC1. The cofactor is pyridoxal 5'-phosphate. Requires Mg(2+) as cofactor.

Its subcellular location is the plastid. The protein localises to the chloroplast. The protein resides in the cytoplasm. It is found in the cytosol. It carries out the reaction L-arginine + H(+) = agmatine + CO2. The protein operates within amine and polyamine biosynthesis; agmatine biosynthesis; agmatine from L-arginine: step 1/1. Its function is as follows. Required for the biosynthesis of putrescine. Catalyzes the first step of polyamine (PA) biosynthesis to produce putrescine from arginine. Is a major contributor to basal arginine decarboxylase (ADC) activity and putrescine biosynthesis. Accumulation of putrescine plays a positive role in salt stress tolerance. Accumulation of putrescine plays a positive role in freezing tolerance. Production of PA is essential for normal seed development. Controls PA homeostasis which is crucial for normal plant growth and development. The sequence is that of Arginine decarboxylase 2 from Arabidopsis thaliana (Mouse-ear cress).